We begin with the raw amino-acid sequence, 371 residues long: ATP-dependent protease ATP-binding subunit-like protein AmiB (371 aa).

Residue 96–103 coordinates ATP; that stretch reads GPTGVGKT.

Belongs to the ClpX chaperone family. Mg(2+) is required as a cofactor.

Unlikely to encode a regulatory protein. Has ATPase activity. AmiB and AmiS may act jointly into a two component ABC transporter system. The polypeptide is ATP-dependent protease ATP-binding subunit-like protein AmiB (amiB) (Pseudomonas aeruginosa (strain ATCC 15692 / DSM 22644 / CIP 104116 / JCM 14847 / LMG 12228 / 1C / PRS 101 / PAO1)).